A 199-amino-acid chain; its full sequence is Adenylyl-sulfate kinase (199 aa).

The segment at 1–22 (MSESNHITWHDSEVTKKQRQHK) is disordered. Residue 34-41 (GLSGSGKS) participates in ATP binding. Residue S108 is the Phosphoserine intermediate of the active site.

The protein belongs to the APS kinase family.

It catalyses the reaction adenosine 5'-phosphosulfate + ATP = 3'-phosphoadenylyl sulfate + ADP + H(+). The protein operates within sulfur metabolism; hydrogen sulfide biosynthesis; sulfite from sulfate: step 2/3. Its function is as follows. Catalyzes the synthesis of activated sulfate. The chain is Adenylyl-sulfate kinase from Staphylococcus epidermidis (strain ATCC 12228 / FDA PCI 1200).